A 294-amino-acid polypeptide reads, in one-letter code: Nucleophosmin (294 aa).

Residues 121–133 (LEEEPESEDEEED) show a composition bias toward acidic residues. The segment at 121–244 (LEEEPESEDE…PKTPKVPLSL (124 aa)) is disordered. The short motif at 153-158 (PQKKPK) is the Nuclear localization signal element. Positions 161-186 (EDDEDDDEDEDDDEDDEDDLDDDEEE) are enriched in acidic residues. Residues 190–196 (PMKKPAR) carry the Nuclear localization signal motif. Over residues 223–233 (KTPDSKKDKSL) the composition is skewed to basic and acidic residues.

The protein belongs to the nucleoplasmin family. As to quaternary structure, decamer formed by two pentameric rings associated in a head-to-head fashion. Phosphorylated.

Its subcellular location is the cytoplasm. The protein resides in the nucleus. The protein localises to the nucleoplasm. It is found in the nucleolus. In terms of biological role, acts as a chaperonin for the core histones H3, H2B and H4. Associated with nucleolar ribonucleoprotein structures and bind single-stranded nucleic acids. It may function in the assembly and/or transport of ribosome. May stimulate endonuclease activity on apurinic/apyrimidinic (AP) double-stranded DNA. May inhibit endonuclease activity on AP single-stranded RNA. This Gallus gallus (Chicken) protein is Nucleophosmin (NPM1).